Consider the following 421-residue polypeptide: Nuclear speckle RNA-binding protein B (421 aa).

3 disordered regions span residues 1–64, 86–114, and 197–226; these read MDNR…VNIY, TGQTSTSTTSSSSSSSTSEPKDTSTMVDT, and TDPQEGTPYLIPSGDMHSYLSQDEDRGIPH. A compositionally biased stretch (pro residues) spans 33 to 44; that stretch reads PLAPPHPQPQPP. A compositionally biased stretch (low complexity) spans 89 to 103; the sequence is TSTSTTSSSSSSSTS. The RRM domain occupies 323 to 409; that stretch reads NTLYVEGLPS…KILRLQFFRN (87 aa).

Isoform 1: Expressed in root meristems, lateral root primordia, root vascular tissues and cotyledon vascular tissues. Isoform 2: Expressed in root meristems, lateral root primordia and root vascular tissues.

It localises to the nucleus speckle. Its function is as follows. Alternative splicing (AS) regulator that binds to specific mRNAs and modulates auxin effects on the transcriptome. Displaced from its targets upon binding to AS competitor long non-coding RNA (ASCO-RNA). The chain is Nuclear speckle RNA-binding protein B from Arabidopsis thaliana (Mouse-ear cress).